The primary structure comprises 348 residues: NADH-ubiquinone oxidoreductase chain 2 (348 aa).

10 helical membrane passes run P3–S23, H25–M45, Y59–I79, T93–V115, L149–G169, I178–P198, T201–F221, I239–G259, I276–L296, and L326–L346.

The protein belongs to the complex I subunit 2 family. Core subunit of respiratory chain NADH dehydrogenase (Complex I) which is composed of 45 different subunits. Interacts with TMEM242.

Its subcellular location is the mitochondrion inner membrane. It catalyses the reaction a ubiquinone + NADH + 5 H(+)(in) = a ubiquinol + NAD(+) + 4 H(+)(out). Core subunit of the mitochondrial membrane respiratory chain NADH dehydrogenase (Complex I) which catalyzes electron transfer from NADH through the respiratory chain, using ubiquinone as an electron acceptor. Essential for the catalytic activity and assembly of complex I. The protein is NADH-ubiquinone oxidoreductase chain 2 of Thyroptera tricolor (Spix's disk-winged bat).